We begin with the raw amino-acid sequence, 139 residues long: Large ribosomal subunit protein uL16 (139 aa).

The span at 1–17 shows a compositional bias: basic residues; sequence MLQPKRTKYRKQQKGRM. The disordered stretch occupies residues 1–25; it reads MLQPKRTKYRKQQKGRMKGLSQRGH.

Belongs to the universal ribosomal protein uL16 family. In terms of assembly, part of the 50S ribosomal subunit.

Its function is as follows. Binds 23S rRNA and is also seen to make contacts with the A and possibly P site tRNAs. This chain is Large ribosomal subunit protein uL16, found in Christiangramia forsetii (strain DSM 17595 / CGMCC 1.15422 / KT0803) (Gramella forsetii).